Reading from the N-terminus, the 485-residue chain is Cysteine--tRNA ligase (485 aa).

Residue Cys28 participates in Zn(2+) binding. Residues 30-40 (MTVYDLCHVGH) carry the 'HIGH' region motif. The Zn(2+) site is built by Cys209, His234, and Glu238. The 'KMSKS' region motif lies at 266–270 (KMSKS). Lys269 provides a ligand contact to ATP.

It belongs to the class-I aminoacyl-tRNA synthetase family. Monomer. It depends on Zn(2+) as a cofactor.

It localises to the cytoplasm. It carries out the reaction tRNA(Cys) + L-cysteine + ATP = L-cysteinyl-tRNA(Cys) + AMP + diphosphate. In Nitrosococcus oceani (strain ATCC 19707 / BCRC 17464 / JCM 30415 / NCIMB 11848 / C-107), this protein is Cysteine--tRNA ligase.